Consider the following 182-residue polypeptide: Ribosome maturation factor RimM (182 aa).

The region spanning 102-182 (EEGDYYWKDL…SIEVDWDPGF (81 aa)) is the PRC barrel domain.

The protein belongs to the RimM family. Binds ribosomal protein uS19.

The protein resides in the cytoplasm. An accessory protein needed during the final step in the assembly of 30S ribosomal subunit, possibly for assembly of the head region. Essential for efficient processing of 16S rRNA. May be needed both before and after RbfA during the maturation of 16S rRNA. It has affinity for free ribosomal 30S subunits but not for 70S ribosomes. The chain is Ribosome maturation factor RimM from Escherichia fergusonii (strain ATCC 35469 / DSM 13698 / CCUG 18766 / IAM 14443 / JCM 21226 / LMG 7866 / NBRC 102419 / NCTC 12128 / CDC 0568-73).